The sequence spans 76 residues: ATP synthase subunit 9, mitochondrial (76 aa).

A run of 2 helical transmembrane segments spans residues 14 to 34 and 52 to 72; these read ISTI…AALI and ILGF…SFLL.

The protein belongs to the ATPase C chain family. As to quaternary structure, F-type ATPases have 2 components, CF(1) - the catalytic core - and CF(0) - the membrane proton channel. CF(1) has five subunits: alpha(3), beta(3), gamma(1), delta(1), epsilon(1). CF(0) has three main subunits: a, b and c.

It is found in the mitochondrion membrane. Mitochondrial membrane ATP synthase (F(1)F(0) ATP synthase or Complex V) produces ATP from ADP in the presence of a proton gradient across the membrane which is generated by electron transport complexes of the respiratory chain. F-type ATPases consist of two structural domains, F(1) - containing the extramembraneous catalytic core and F(0) - containing the membrane proton channel, linked together by a central stalk and a peripheral stalk. During catalysis, ATP synthesis in the catalytic domain of F(1) is coupled via a rotary mechanism of the central stalk subunits to proton translocation. Part of the complex F(0) domain. A homomeric c-ring of probably 10 subunits is part of the complex rotary element. The chain is ATP synthase subunit 9, mitochondrial (ATP9) from Vanderwaltozyma polyspora (strain ATCC 22028 / DSM 70294 / BCRC 21397 / CBS 2163 / NBRC 10782 / NRRL Y-8283 / UCD 57-17) (Kluyveromyces polysporus).